A 569-amino-acid polypeptide reads, in one-letter code: Cationic amino acid transporter 9, chloroplastic (569 aa).

Residues Met-1 to Arg-41 constitute a chloroplast transit peptide. 14 consecutive transmembrane segments (helical) span residues Gly-53–Val-73, Ala-81–Leu-101, Val-113–Val-135, Tyr-155–Gly-175, Leu-181–Val-201, Val-215–Ile-235, Ala-250–Asn-270, Ile-284–Leu-304, Ile-333–Val-353, His-406–Leu-428, Trp-444–Phe-464, Phe-467–Val-487, Phe-502–Phe-522, and Glu-528–Gly-548.

The protein belongs to the amino acid-polyamine-organocation (APC) superfamily. Cationic amino acid transporter (CAT) (TC 2.A.3.3) family. Expressed in roots, stems, flowers, and leaves.

The protein localises to the plastid. It localises to the chloroplast membrane. Permease involved in the transport of the cationic amino acids. The sequence is that of Cationic amino acid transporter 9, chloroplastic (CAT9) from Arabidopsis thaliana (Mouse-ear cress).